Reading from the N-terminus, the 171-residue chain is Mitochondrial import inner membrane translocase subunit Tim17-A (171 aa).

Residues C9 and C78 are joined by a disulfide bond. Helical transmembrane passes span 17 to 37 (CGGAFTMGTIGGGIFQAFKGF), 63 to 77 (GGSFAVWGGLFSTID), and 113 to 133 (VGSAAMGGILLALIEGAGILL). Residues 147–171 (FAEDHSQLPSSQLPSSPFGDYRQYQ) are disordered. A compositionally biased stretch (low complexity) spans 153 to 163 (QLPSSQLPSSP).

Belongs to the Tim17/Tim22/Tim23 family. In terms of assembly, component of the TIM23 complex at least composed of TIMM23, TIMM17 (TIMM17A or TIMM17B) and TIMM50. The complex interacts with the TIMM44 component of the PAM complex and with DNAJC15. In terms of processing, degraded by YMEL1 downstream of the integrated stress response (ISR).

The protein resides in the mitochondrion inner membrane. Its function is as follows. Essential component of the TIM23 complex, a complex that mediates the translocation of transit peptide-containing proteins across the mitochondrial inner membrane. The chain is Mitochondrial import inner membrane translocase subunit Tim17-A (Timm17a) from Rattus norvegicus (Rat).